Here is a 351-residue protein sequence, read N- to C-terminus: AA9 family lytic polysaccharide monooxygenase A (351 aa).

The signal sequence occupies residues 1 to 20 (MSNKAATLLAALSGAALVAA). Residues His-21 and His-107 each contribute to the Cu(2+) site. Residues Cys-76 and Cys-196 are joined by a disulfide bond. 2 residues coordinate O2: His-182 and Gln-191. Residue Tyr-193 coordinates Cu(2+). One can recognise a CBM1 domain in the interval 315–351 (GVAPKWGQCGGNGWTGPTVCASGSTCTVLNPYYSQCI).

This sequence belongs to the polysaccharide monooxygenase AA9 family. Requires Cu(2+) as cofactor.

It localises to the secreted. The enzyme catalyses [(1-&gt;4)-beta-D-glucosyl]n+m + reduced acceptor + O2 = 4-dehydro-beta-D-glucosyl-[(1-&gt;4)-beta-D-glucosyl]n-1 + [(1-&gt;4)-beta-D-glucosyl]m + acceptor + H2O.. Functionally, lytic polysaccharide monooxygenase (LPMO) that depolymerizes crystalline and amorphous polysaccharides via the oxidation of scissile alpha- or beta-(1-4)-glycosidic bonds, yielding C1 and C4 oxidation products. Catalysis by LPMOs requires the reduction of the active-site copper from Cu(II) to Cu(I) by a reducing agent and H(2)O(2) or O(2) as a cosubstrate. This chain is AA9 family lytic polysaccharide monooxygenase A, found in Podospora anserina (strain S / ATCC MYA-4624 / DSM 980 / FGSC 10383) (Pleurage anserina).